The primary structure comprises 171 residues: Galectin-related protein A (171 aa).

A Galectin domain is found at Pro38 to Leu170.

In terms of biological role, does not bind lactose, and may not bind carbohydrates. This chain is Galectin-related protein A (lgalsl-a), found in Xenopus laevis (African clawed frog).